We begin with the raw amino-acid sequence, 400 residues long: Phosphoglycerate kinase (400 aa).

Substrate contacts are provided by residues 21–23 (DFN), Arg37, 60–63 (HLGR), Arg121, and Arg154. Residues Lys204, Glu326, and 355-358 (GGDS) contribute to the ATP site.

The protein belongs to the phosphoglycerate kinase family. As to quaternary structure, monomer.

The protein localises to the cytoplasm. The catalysed reaction is (2R)-3-phosphoglycerate + ATP = (2R)-3-phospho-glyceroyl phosphate + ADP. It participates in carbohydrate degradation; glycolysis; pyruvate from D-glyceraldehyde 3-phosphate: step 2/5. The polypeptide is Phosphoglycerate kinase (Chloroflexus aggregans (strain MD-66 / DSM 9485)).